Consider the following 705-residue polypeptide: Lethal(3)malignant brain tumor-like protein 2 (705 aa).

The disordered stretch occupies residues 1 to 84 (MEKPPSIEET…GTPRSLDGSG (84 aa)). Position 13 is a phosphoserine (Ser-13). The segment covering 15–25 (PMEEEEDDDLE) has biased composition (acidic residues). Positions 38 to 49 (SSVGSESSSYLE) are enriched in low complexity. Residues 50–60 (ESSEAENEDRE) are compositionally biased toward acidic residues. Phosphoserine is present on Ser-67. Thr-76 is modified (phosphothreonine). The FCS-type zinc-finger motif lies at 81–116 (DGSGSEPAVCEMCGIVGTREAFFSKTKRFCSVSCSR). Zn(2+)-binding residues include Cys-90, Cys-93, Cys-110, and Cys-114. 4 MBT repeats span residues 179 to 283 (FDWG…LVPP), 291 to 391 (TDWK…IKMS), 397 to 500 (MAHH…LTPP), and 508 to 604 (FNWE…LQPP). Ser-338 carries the post-translational modification Phosphoserine. Lys-405 participates in a covalent cross-link: Glycyl lysine isopeptide (Lys-Gly) (interchain with G-Cter in SUMO2). The disordered stretch occupies residues 608 to 705 (EPATPLKAKE…VENIKQETDD (98 aa)). Over residues 619–634 (TKKKKKQFGKKRKRIP) the composition is skewed to basic residues. Glycyl lysine isopeptide (Lys-Gly) (interchain with G-Cter in SUMO2) cross-links involve residues Lys-647, Lys-659, and Lys-675. Phosphoserine is present on residues Ser-683, Ser-688, and Ser-689. A Glycyl lysine isopeptide (Lys-Gly) (interchain with G-Cter in SUMO1); alternate cross-link involves residue Lys-700. Residue Lys-700 forms a Glycyl lysine isopeptide (Lys-Gly) (interchain with G-Cter in SUMO2); alternate linkage.

In terms of assembly, part of the E2F6.com-1 complex in G0 phase composed of E2F6, MGA, MAX, TFDP1, CBX3, BAT8, EUHMTASE1, RING1, RNF2, MBLR, BAT8 and YAF2.

Its subcellular location is the nucleus. Putative Polycomb group (PcG) protein. PcG proteins maintain the transcriptionally repressive state of genes, probably via a modification of chromatin, rendering it heritably changed in its expressibility. Its association with a chromatin-remodeling complex suggests that it may contribute to prevent expression of genes that trigger the cell into mitosis. Binds to monomethylated and dimethylated 'Lys-20' on histone H4. Binds histone H3 peptides that are monomethylated or dimethylated on 'Lys-4', 'Lys-9' or 'Lys-27'. The sequence is that of Lethal(3)malignant brain tumor-like protein 2 (L3MBTL2) from Pongo abelii (Sumatran orangutan).